A 362-amino-acid polypeptide reads, in one-letter code: Probable S-adenosylmethionine-dependent methyltransferase At5g37970 (362 aa).

6 residues coordinate S-adenosyl-L-homocysteine: Tyr19, Cys66, Asn71, Asp107, Ser136, and Phe137. The Mg(2+) site is built by Asn175, Glu261, and Phe263.

This sequence belongs to the methyltransferase superfamily. Type-7 methyltransferase family. As to quaternary structure, homodimer. Mg(2+) serves as cofactor.

This Arabidopsis thaliana (Mouse-ear cress) protein is Probable S-adenosylmethionine-dependent methyltransferase At5g37970.